Reading from the N-terminus, the 135-residue chain is MVLETISKIIKTQLPAYLKKFPLPETIGGFARLTVLDWLRLLPLLGILALLGYLTIRPFLPKKKKQKDSLINLKIQKENPKVVNEIDIEDLKSTNVCYCRCWRSKTFPVCDKSHIKHNELTGDNVGPLILKKKIL.

Topologically, residues 1 to 37 are lumenal; the sequence is MVLETISKIIKTQLPAYLKKFPLPETIGGFARLTVLD. A helical transmembrane segment spans residues 38–60; it reads WLRLLPLLGILALLGYLTIRPFL. At 61-135 the chain is on the cytoplasmic side; that stretch reads PKKKKQKDSL…GPLILKKKIL (75 aa). Residues C99, C101, C110, and H114 each contribute to the [2Fe-2S] cluster site.

It belongs to the CISD protein family. CISD2 subfamily. In terms of assembly, homodimer. [2Fe-2S] cluster is required as a cofactor.

Its subcellular location is the endoplasmic reticulum membrane. The protein resides in the mitochondrion outer membrane. Its function is as follows. Regulator of autophagy that contributes to antagonize becn1-mediated cellular autophagy at the endoplasmic reticulum. Participates in the interaction of bcl2 with becn1 and is required for bcl2-mediated depression of endoplasmic reticulum Ca(2+) stores during autophagy. The polypeptide is CDGSH iron-sulfur domain-containing protein 2B (cisd2b) (Salmo salar (Atlantic salmon)).